The following is an 87-amino-acid chain: Small ribosomal subunit protein bS20 (87 aa).

Residues 1–15 are compositionally biased toward basic residues; the sequence is MANHKSAMKRIKQTA. Residues 1–27 are disordered; sequence MANHKSAMKRIKQTAKRTERNKHERST. The segment covering 16 to 27 has biased composition (basic and acidic residues); that stretch reads KRTERNKHERST.

This sequence belongs to the bacterial ribosomal protein bS20 family.

Functionally, binds directly to 16S ribosomal RNA. The protein is Small ribosomal subunit protein bS20 of Citrifermentans bemidjiense (strain ATCC BAA-1014 / DSM 16622 / JCM 12645 / Bem) (Geobacter bemidjiensis).